The following is a 542-amino-acid chain: MAEGEESKKMNLQTSYFDVVGICCSSEVSIVGNVLRQVDGVKEFSVIVPSRTVIVVHDTFLISPLQIVKALNQARLEASVRPYGETSLKSQWPSPFAIVSGVLLVLSFFKYFYSPLEWLAIVAVVAGVFPILAKAVASVTRFRLDINALTLIAVIATLCMQDFTEAATIVFLFSVADWLESSAAHKASIVMSSLMSLAPRKAVIADTGLEVDVDEVGINTVVSVKAGESIPIDGVVVDGSCDVDEKTLTGESFPVSKQRESTVMAATINLNGYIKVKTTALARDCVVAKMTKLVEEAQKSQTKTQRFIDKCSRYYTPAVVVSAACFAVIPVLLKVQDLSHWFHLALVVLVSGCPCGLILSTPVATFCALTKAATSGFLIKTGDCLETLAKIKIVAFDKTGTITKAEFMVSDFRSLSPSINLHKLLYWVSSIECKSSHPMAAALIDYARSVSVEPKPDIVENFQNFPGEGVYGRIDGQDIYIGNKRIAQRAGCLTDNVPDIEATMKRGKTIGYIYMGAKLTGSFNLLDGCRYGVAQALKELKS.

Topologically, residues 1-89 (MAEGEESKKM…VRPYGETSLK (89 aa)) are cytoplasmic. Residues 13–79 (QTSYFDVVGI…ALNQARLEAS (67 aa)) enclose the HMA domain. A helical transmembrane segment spans residues 90–111 (SQWPSPFAIVSGVLLVLSFFKY). Over 112-114 (FYS) the chain is Extracellular. Residues 115 to 134 (PLEWLAIVAVVAGVFPILAK) traverse the membrane as a helical segment. Residues 135–141 (AVASVTR) are Cytoplasmic-facing. A helical transmembrane segment spans residues 142-162 (FRLDINALTLIAVIATLCMQD). F163 is a topological domain (extracellular). The helical transmembrane segment at 164–184 (TEAATIVFLFSVADWLESSAA) threads the bilayer. The Cytoplasmic portion of the chain corresponds to 185-310 (HKASIVMSSL…QTKTQRFIDK (126 aa)). Residues 311 to 333 (CSRYYTPAVVVSAACFAVIPVLL) form a helical membrane-spanning segment. Residues 334-341 (KVQDLSHW) lie on the Extracellular side of the membrane. A helical membrane pass occupies residues 342 to 359 (FHLALVVLVSGCPCGLIL). Over 360 to 542 (STPVATFCAL…VAQALKELKS (183 aa)) the chain is Cytoplasmic.

This sequence belongs to the cation transport ATPase (P-type) (TC 3.A.3) family. Type IB subfamily.

It is found in the membrane. This Arabidopsis thaliana (Mouse-ear cress) protein is Putative inactive cadmium/zinc-transporting ATPase HMA3 (HMA3).